The sequence spans 3583 residues: Surfactin synthase subunit 2 (3583 aa).

Carrier domains follow at residues 965-1039, 2005-2080, and 3034-3108; these read APKT…EENE, APET…EASA, and APTT…ERAE. 3 positions are modified to O-(pantetheine 4'-phosphoryl)serine: Ser-999, Ser-2040, and Ser-3069.

The protein belongs to the ATP-dependent AMP-binding enzyme family. Requires pantetheine 4'-phosphate as cofactor.

It functions in the pathway antibiotic biosynthesis; surfactin biosynthesis. This protein is a multifunctional enzyme able to activate and polymerize the amino acids Leu, Glu, Asp and Val. Activation sites for these AA consist of individual domains. The protein is Surfactin synthase subunit 2 (srfAB) of Bacillus subtilis (strain 168).